The chain runs to 116 residues: CDKN2AIP N-terminal-like protein (116 aa).

An N-acetylmethionine modification is found at M1. The region spanning 24-116 is the XRN2-binding (XTBD) domain; it reads AEQFRSYSES…RSELMRKHQS (93 aa).

Belongs to the CARF family. In terms of assembly, interacts with XRN2; the interaction is direct.

The sequence is that of CDKN2AIP N-terminal-like protein (Cdkn2aipnl) from Mus musculus (Mouse).